Consider the following 807-residue polypeptide: MSSGQSFSRSLMKLPLSLLVKSTSIPSNPVEDLNIDLSKPIVYALPFRSSVDILTLQKHALELGLPDPLSKLEINGKSLQRYVFISSRKTLLQDDDYVPSSSIEVFSELLSLHAEDSELDVQVIPATVLWGRKPGKENNQKPYLQAMNGLEKSKAVLLAGRDCLVRFSPVVSLRYMANSHGTDSTIAHKLARVARIHFSRQKLAASGPNLPSRQALFDRLLKSEAIKKAIEDEAESKNISIEKASKEAQDIMDEIAANFSYSLIKRGEKILGWLWNKLYQGLHISNASTVRKLAQDGHEIVYVPCHRSHMDYLLLSYVLYHEGMVPPHIAAGINLNFFPAGPIFRHGGAFFIRRSFKGNKLYSTIFREYLAELFAKGYSVEYFSEGGRSRTGRLLQAKTGMLAMTIQAMLRGMNRPVTLVPVYIGYEHVMEVATYAKELRGKRKEKENASLVIRTIRKLRNFGKGYVNFGEPIQLNQYLNEHAPEWTKDIDPMGTSKPQWMNPVVNDLATKMMTHINDAAATNALTLCATALLASRQRALSRDSLVSQINCYLSLLKNVPYSDTFTVPKDSAEDLVKHAESLNKFLIESDTMGDIISLDRHQSILMTYYRNNIIHLFALPSLIAQMTIRQHGLSIDAIQENVAAIYPFLKKELFLSYDEDQLESVVANIIDELVGQGMLVVSNNQVTINQSNSQALMLLGRTISETLQRYSIALNLLAENPDLDKSDLEQKSQDIAQRLGRLHGINAPEFFDKGVFASMFATLKQQQYLDNDGNCDLEKTQQFAKLLYSMLYPEVRLTIQESIHQAE.

The HXXXXD motif motif lies at 305-310 (CHRSHM).

Belongs to the GPAT/DAPAT family.

It localises to the cell inner membrane. It catalyses the reaction sn-glycerol 3-phosphate + an acyl-CoA = a 1-acyl-sn-glycero-3-phosphate + CoA. It functions in the pathway phospholipid metabolism; CDP-diacylglycerol biosynthesis; CDP-diacylglycerol from sn-glycerol 3-phosphate: step 1/3. In Vibrio atlanticus (strain LGP32) (Vibrio splendidus (strain Mel32)), this protein is Glycerol-3-phosphate acyltransferase.